The primary structure comprises 742 residues: Phosphoribosylformylglycinamidine synthase subunit PurL (742 aa).

His53 is an active-site residue. Residues Tyr56 and Lys95 each coordinate ATP. Residue Glu97 participates in Mg(2+) binding. Substrate contacts are provided by residues 98–101 (SHNH) and Arg120. The Proton acceptor role is filled by His99. A Mg(2+)-binding site is contributed by Asp121. Residue Gln244 coordinates substrate. Asp274 is a binding site for Mg(2+). Position 318-320 (318-320 (ESQ)) interacts with substrate. The ATP site is built by Asp501 and Gly538. Position 539 (Asn539) interacts with Mg(2+). Ser541 lines the substrate pocket.

Belongs to the FGAMS family. In terms of assembly, monomer. Part of the FGAM synthase complex composed of 1 PurL, 1 PurQ and 2 PurS subunits.

The protein localises to the cytoplasm. The catalysed reaction is N(2)-formyl-N(1)-(5-phospho-beta-D-ribosyl)glycinamide + L-glutamine + ATP + H2O = 2-formamido-N(1)-(5-O-phospho-beta-D-ribosyl)acetamidine + L-glutamate + ADP + phosphate + H(+). It participates in purine metabolism; IMP biosynthesis via de novo pathway; 5-amino-1-(5-phospho-D-ribosyl)imidazole from N(2)-formyl-N(1)-(5-phospho-D-ribosyl)glycinamide: step 1/2. Functionally, part of the phosphoribosylformylglycinamidine synthase complex involved in the purines biosynthetic pathway. Catalyzes the ATP-dependent conversion of formylglycinamide ribonucleotide (FGAR) and glutamine to yield formylglycinamidine ribonucleotide (FGAM) and glutamate. The FGAM synthase complex is composed of three subunits. PurQ produces an ammonia molecule by converting glutamine to glutamate. PurL transfers the ammonia molecule to FGAR to form FGAM in an ATP-dependent manner. PurS interacts with PurQ and PurL and is thought to assist in the transfer of the ammonia molecule from PurQ to PurL. In Limosilactobacillus reuteri (strain DSM 20016) (Lactobacillus reuteri), this protein is Phosphoribosylformylglycinamidine synthase subunit PurL.